The chain runs to 950 residues: Lon protease homolog, mitochondrial (950 aa).

A mitochondrion-targeting transit peptide spans 1-65 (MAASTGYVRL…VPMGGGQWRG (65 aa)). Disordered regions lie at residues 67-94 (WDAG…SGEG) and 212-243 (PEGL…LGAK). The 249-residue stretch at 112–360 (LPLIAISRNP…KALSLLKKEF (249 aa)) folds into the Lon N-terminal domain. The segment covering 224-233 (KSRRKLKRGK) has biased composition (basic residues). 513 to 520 (GPPGVGKT) provides a ligand contact to ATP. A Lon proteolytic domain is found at 749–939 (VTPPGVVMGL…RDIFRIAFPL (191 aa)). Residues S845 and K888 contribute to the active site.

The protein belongs to the peptidase S16 family. In terms of assembly, homohexamer. Organized in a ring with a central cavity. The ATP-binding and proteolytic domains (AP-domain) form a hexameric chamber, while the N-terminal domain is arranged as a trimer of dimers. DNA and RNA binding is stimulated by substrate and inhibited by ATP binding. Interacts with TWNK and mitochondrial DNA polymerase subunit POLG.

The protein localises to the mitochondrion matrix. It catalyses the reaction Hydrolysis of proteins in presence of ATP.. Its function is as follows. ATP-dependent serine protease that mediates the selective degradation of misfolded, unassembled or oxidatively damaged polypeptides as well as certain short-lived regulatory proteins in the mitochondrial matrix. Endogenous substrates include mitochondrial steroidogenic acute regulatory (StAR) protein, DELE1, helicase Twinkle (TWNK) and the large ribosomal subunit protein MRPL32/bL32m. MRPL32/bL32m is protected from degradation by LONP1 when it is bound to a nucleic acid (RNA), but TWNK is not. May also have a chaperone function in the assembly of inner membrane protein complexes. Participates in the regulation of mitochondrial gene expression and in the maintenance of the integrity of the mitochondrial genome. Binds to mitochondrial promoters and RNA in a single-stranded, site-specific, and strand-specific manner. May regulate mitochondrial DNA replication and/or gene expression using site-specific, single-stranded DNA binding to target the degradation of regulatory proteins binding to adjacent sites in mitochondrial promoters. This chain is Lon protease homolog, mitochondrial (Lonp1), found in Rattus norvegicus (Rat).